The chain runs to 261 residues: Proliferating cell nuclear antigen (261 aa).

3 positions are modified to N6-acetyllysine: K14, K77, and K80. A DNA-binding region spans residues 61 to 80 (RCDRNLAMGVNLTSMSKILK). An intrachain disulfide couples C135 to C162. K164 is covalently cross-linked (Glycyl lysine isopeptide (Lys-Gly) (interchain with G-Cter in SUMO2); alternate). K164 participates in a covalent cross-link: Glycyl lysine isopeptide (Lys-Gly) (interchain with G-Cter in ubiquitin); alternate. Y211 bears the Phosphotyrosine; by EGFR mark. K248 carries the post-translational modification N6-acetyllysine. K254 participates in a covalent cross-link: Glycyl lysine isopeptide (Lys-Gly) (interchain with G-Cter in SUMO2).

The protein belongs to the PCNA family. Homotrimer. Interacts with p300/EP300; the interaction occurs on chromatin in UV-irradiated damaged cells. Interacts with CREBBP (via transactivation domain and C-terminus); the interaction occurs on chromatin in UV-irradiated damaged cells. Directly interacts with POLD1, POLD3 and POLD4 subunits of the DNA polymerase delta complex, POLD3 being the major interacting partner; the interaction with POLD3 is inhibited by CDKN1A/p21(CIP1). Forms a complex with activator 1 heteropentamer in the presence of ATP. Interacts with EXO1, POLH, POLK, DNMT1, ERCC5, FEN1, CDC6 and POLDIP2. Interacts with POLB. Interacts with APEX2; this interaction is triggered by reactive oxygen species and increased by misincorporation of uracil in nuclear DNA. Forms a ternary complex with DNTTIP2 and core histone. Interacts with KCTD10. Interacts with PPP1R15A. Interacts with SMARCA5/SNF2H. Interacts with BAZ1B/WSTF; the interaction is direct and is required for BAZ1B/WSTF binding to replication foci during S phase. Interacts with HLTF and SHPRH. Interacts with NUDT15. Interaction is disrupted in response to UV irradiation and acetylation. Interacts with CDKN1A/p21(CIP1) and CDT1; interacts via their PIP-box which also recruits the DCX(DTL) complex. The interaction with CDKN1A inhibits POLD3 binding. Interacts with DDX11. Interacts with EGFR; positively regulates PCNA. Interacts with PARPBP. Interacts (when ubiquitinated) with SPRTN; leading to enhance RAD18-mediated PCNA ubiquitination. Interacts (when polyubiquitinated) with ZRANB3. Interacts with SMARCAD1. Interacts with CDKN1C. Interacts with PCLAF (via PIP-box). Interacts with RTEL1 (via PIP-box); the interaction is direct and essential for the suppression of telomere fragility. Interacts with FAM111A (via PIP-box); the interaction is direct and required for PCNA loading on chromatin binding. Interacts with LIG1. Interacts with SETMAR. Interacts with ANKRD17. Interacts with FBXO18/FBH1 (via PIP-box); the interaction recruits the DCX(DTL) complex and promotes ubiquitination and degradation of FBXO18/FBH1. Interacts with POLN. Interacts with SDE2 (via PIP-box); the interaction is direct and prevents ultraviolet light induced monoubiquitination. Component of the replisome complex composed of at least DONSON, MCM2, MCM7, PCNA and TICRR; interaction at least with PCNA occurs during DNA replication. Interacts with MAPK15; the interaction is chromatin binding dependent and prevents MDM2-mediated PCNA destruction by inhibiting the association of PCNA with MDM2. Interacts with PARP10 (via PIP-box). Interacts with DDI2. Interacts with HMCES (via PIP-box). Interacts with TRAIP (via PIP-box). Interacts with UHRF2. Interacts with ALKBH2; this interaction is enhanced during the S-phase of the cell cycle. Interacts with ATAD5; the interaction promotes USP1-mediated PCNA deubiquitination. Interacts (when phosphorylated) with GRB2. Interacts with ANG. Interacts with nuclear UNG; this interaction mediates UNG recruitment to S-phase replication foci. Interacts with ERCC6L2 (via an atypical PIP-box); this interaction facilitates cenrtomeric localization of ERCC6L2. Phosphorylated. Phosphorylation at Tyr-211 by EGFR stabilizes chromatin-associated PCNA. In terms of processing, acetylated by CREBBP and p300/EP300; preferentially acetylated by CREBBP on Lys-80, Lys-13 and Lys-14 and on Lys-77 by p300/EP300 upon loading on chromatin in response to UV irradiation. Lysine acetylation disrupts association with chromatin, hence promoting PCNA ubiquitination and proteasomal degradation in response to UV damage in a CREBBP- and EP300-dependent manner. Acetylation disrupts interaction with NUDT15 and promotes degradation. Post-translationally, ubiquitinated. Following DNA damage, can be either monoubiquitinated to stimulate direct bypass of DNA lesions by specialized DNA polymerases or polyubiquitinated to promote recombination-dependent DNA synthesis across DNA lesions by template switching mechanisms. Following induction of replication stress, monoubiquitinated by the UBE2B-RAD18 complex on Lys-164, leading to recruit translesion (TLS) polymerases, which are able to synthesize across DNA lesions in a potentially error-prone manner. An error-free pathway also exists and requires non-canonical polyubiquitination on Lys-164 through 'Lys-63' linkage of ubiquitin moieties by the E2 complex UBE2N-UBE2V2 and the E3 ligases, HLTF, RNF8 and SHPRH. This error-free pathway, also known as template switching, employs recombination mechanisms to synthesize across the lesion, using as a template the undamaged, newly synthesized strand of the sister chromatid. Monoubiquitination at Lys-164 also takes place in undamaged proliferating cells, and is mediated by the DCX(DTL) complex, leading to enhance PCNA-dependent translesion DNA synthesis. Sumoylated during S phase. Methylated on glutamate residues by ARMT1.

The protein resides in the nucleus. In terms of biological role, auxiliary protein of DNA polymerase delta and epsilon, is involved in the control of eukaryotic DNA replication by increasing the polymerase's processibility during elongation of the leading strand. Induces a robust stimulatory effect on the 3'-5' exonuclease and 3'-phosphodiesterase, but not apurinic-apyrimidinic (AP) endonuclease, APEX2 activities. Has to be loaded onto DNA in order to be able to stimulate APEX2. Plays a key role in DNA damage response (DDR) by being conveniently positioned at the replication fork to coordinate DNA replication with DNA repair and DNA damage tolerance pathways. Acts as a loading platform to recruit DDR proteins that allow completion of DNA replication after DNA damage and promote postreplication repair: Monoubiquitinated PCNA leads to recruitment of translesion (TLS) polymerases, while 'Lys-63'-linked polyubiquitination of PCNA is involved in error-free pathway and employs recombination mechanisms to synthesize across the lesion. The sequence is that of Proliferating cell nuclear antigen (Pcna) from Rattus norvegicus (Rat).